The primary structure comprises 253 residues: Large ribosomal subunit protein uL2C (253 aa).

Belongs to the universal ribosomal protein uL2 family. Component of the large ribosomal subunit (LSU). Mature yeast ribosomes consist of a small (40S) and a large (60S) subunit. The 40S small subunit contains 1 molecule of ribosomal RNA (18S rRNA) and at least 33 different proteins. The large 60S subunit contains 3 rRNA molecules (25S, 5.8S and 5S rRNA) and at least 46 different proteins.

It localises to the cytoplasm. It is found in the nucleus. In terms of biological role, component of the ribosome, a large ribonucleoprotein complex responsible for the synthesis of proteins in the cell. The small ribosomal subunit (SSU) binds messenger RNAs (mRNAs) and translates the encoded message by selecting cognate aminoacyl-transfer RNA (tRNA) molecules. The large subunit (LSU) contains the ribosomal catalytic site termed the peptidyl transferase center (PTC), which catalyzes the formation of peptide bonds, thereby polymerizing the amino acids delivered by tRNAs into a polypeptide chain. The nascent polypeptides leave the ribosome through a tunnel in the LSU and interact with protein factors that function in enzymatic processing, targeting, and the membrane insertion of nascent chains at the exit of the ribosomal tunnel. This is Large ribosomal subunit protein uL2C (rpl803) from Schizosaccharomyces pombe (strain 972 / ATCC 24843) (Fission yeast).